The sequence spans 581 residues: Leucine-rich repeat-containing protein 15 (581 aa).

The first 21 residues, 1–21, serve as a signal peptide directing secretion; sequence MPLKHYLLLLVGCQAWGAGLA. The LRRNT domain maps to 22-53; the sequence is YHGCPSECTCSRASQVECTGARIVAVPTPLPW. The Extracellular portion of the chain corresponds to 22–538; that stretch reads YHGCPSECTC…VWGMTQAQSG (517 aa). LRR repeat units lie at residues 54–75, 78–99, 102–123, 126–147, 150–171, 174–195, 198–219, 222–243, 246–267, 270–291, 294–315, 318–339, 342–363, 366–387, and 390–411; these read NAMSLQILNTHITELNESPFLN, ALIALRIEKNELSRITPGAFRN, SLRYLSLANNKLQVLPIGLFQG, SLESLLLSSNQLLQIQPAHFSQ, NLKELQLHGNHLEYIPDGAFDH, GLTKLNLGKNSLTHISPRVFQH, NLQVLRLYENRLTDIPMGTFDG, NLQELALQQNQIGLLSPGLFHN, NLQRLYLSNNHISQLPPSVFMQ, QLNRLTLFGNSLKELSPGIFGP, NLRELWLYDNHISSLPDNVFSN, QLQVLILSRNQISFISPGAFNG, ELRELSLHTNALQDLDGNVFRM, NLQNISLQNNRLRQLPGNIFAN, and GLMAIQLQNNQLENLPLGIFDH. Asn75 carries an N-linked (GlcNAc...) asparagine glycan. A glycan (N-linked (GlcNAc...) asparagine) is linked at Asn369. The region spanning 423–475 is the LRRCT domain; sequence NPWRCDSDILPLRNWLLLNQPRLGTDTVPVCFSPANVRGQSLIIINVNVAVPS. Positions 489–509 are disordered; that stretch reads WYPDTPSYPDTTSVSSTTELT. Residues 499–509 are compositionally biased toward low complexity; the sequence is TTSVSSTTELT. A helical membrane pass occupies residues 539–559; it reads LAIAAIVIGIVALACSLAACV. Residues 560–581 lie on the Cytoplasmic side of the membrane; the sequence is GCCCCKKRSQAVLMQMKAPNEC.

As to quaternary structure, (Microbial infection) Interacts with human coronavirus SARS-CoV-2 spike protein (via RBD domain); the interaction is direct and sequesters virions at the cell surface. (Microbial infection) Interacts with human coronavirus SARS-CoV-2 spike protein (via RBD domain); the interaction is direct. As to expression, expressed in brain and placenta. Expressed in lung fibroblasts. Expressed in chodrocytes.

The protein resides in the cell membrane. (Microbial infection) Modulates the ability of SARS-CoV-2 to infect host cells through interaction with the spike protein. Does not act as a SARS-CoV-2 entry receptor but sequesters virions and antagonizes in trans SARS-CoV-2 infection of ACE2(+) cells when expressed on nearby cells. The sequence is that of Leucine-rich repeat-containing protein 15 (LRRC15) from Homo sapiens (Human).